Here is a 442-residue protein sequence, read N- to C-terminus: Histidinol dehydrogenase (442 aa).

Residues Y142, Q204, and N227 each contribute to the NAD(+) site. Residues S250, Q272, and H275 each contribute to the substrate site. The Zn(2+) site is built by Q272 and H275. Residues E340 and H341 each act as proton acceptor in the active site. Substrate is bound by residues H341, D374, E428, and H433. A Zn(2+)-binding site is contributed by D374. Zn(2+) is bound at residue H433.

Belongs to the histidinol dehydrogenase family. Zn(2+) is required as a cofactor.

The enzyme catalyses L-histidinol + 2 NAD(+) + H2O = L-histidine + 2 NADH + 3 H(+). It participates in amino-acid biosynthesis; L-histidine biosynthesis; L-histidine from 5-phospho-alpha-D-ribose 1-diphosphate: step 9/9. Functionally, catalyzes the sequential NAD-dependent oxidations of L-histidinol to L-histidinaldehyde and then to L-histidine. The sequence is that of Histidinol dehydrogenase from Prochlorococcus marinus (strain MIT 9313).